The sequence spans 200 residues: Transgelin (200 aa).

Ser2 is modified (N-acetylserine). Ser11 carries the post-translational modification Phosphoserine. The region spanning 26-136 (PEAIQNIKIW…QTLKSLSRYA (111 aa)) is the Calponin-homology (CH) domain. The segment at 144–168 (FPVLGPQLSTKKPRPPVKSKPKHLQ) is disordered. The interval 151–164 (LSTKKPRPPVKSKP) is interaction with SH3 domain of ABP1. Over residues 154–165 (KKPRPPVKSKPK) the composition is skewed to basic residues.

Binds to actin. Interacts with ABP1.

The protein localises to the cytoplasm. Its subcellular location is the cytoskeleton. The protein resides in the actin patch. Has actin-binding and actin-bundling activity. Stabilizes actin filaments against disassembly. The polypeptide is Transgelin (SCP1) (Saccharomyces cerevisiae (strain ATCC 204508 / S288c) (Baker's yeast)).